A 452-amino-acid polypeptide reads, in one-letter code: Glucose-6-phosphate isomerase (452 aa).

Glu290 functions as the Proton donor in the catalytic mechanism. Residues His311 and Lys425 contribute to the active site.

This sequence belongs to the GPI family.

It is found in the cytoplasm. It catalyses the reaction alpha-D-glucose 6-phosphate = beta-D-fructose 6-phosphate. It functions in the pathway carbohydrate biosynthesis; gluconeogenesis. Its pathway is carbohydrate degradation; glycolysis; D-glyceraldehyde 3-phosphate and glycerone phosphate from D-glucose: step 2/4. In terms of biological role, catalyzes the reversible isomerization of glucose-6-phosphate to fructose-6-phosphate. This chain is Glucose-6-phosphate isomerase, found in Limosilactobacillus reuteri (strain DSM 20016) (Lactobacillus reuteri).